A 265-amino-acid chain; its full sequence is Novel plant SNARE 12 (265 aa).

Residues 1–217 (MASELPMSPH…IGRQVATDKC (217 aa)) lie on the Cytoplasmic side of the membrane. Positions 32–106 (LDKIKDSSRQ…ALRKTYLNTL (75 aa)) form a coiled coil. S74 bears the Phosphoserine mark. Residues 146–208 (MKRMDETDQA…KKASQLVKEI (63 aa)) enclose the t-SNARE coiled-coil homology domain. The helical; Anchor for type IV membrane protein transmembrane segment at 218-238 (IMAFLFLIVCGVIAIIIVKIV) threads the bilayer. The Vesicular segment spans residues 239 to 265 (NPNNKDIRDIPGLAPPAQSRKLLYFRE).

This sequence belongs to the novel plant SNARE family. In terms of tissue distribution, expressed in roots, stems, flower, siliques and leaves.

The protein localises to the membrane. Functionally, vesicle trafficking protein that functions in the secretory pathway. The protein is Novel plant SNARE 12 (NPSN12) of Arabidopsis thaliana (Mouse-ear cress).